The following is a 637-amino-acid chain: tRNA-dihydrouridine(47) synthase [NAD(P)(+)]-like (637 aa).

3 disordered regions span residues methionine 1 to arginine 21, leucine 41 to alanine 63, and glutamate 85 to alanine 105. Positions proline 89–proline 104 are enriched in basic residues. 2 C3H1-type zinc fingers span residues tyrosine 107–glycine 137 and alanine 145–proline 175. Position 260 is a phosphothreonine (threonine 260). Phosphoserine occurs at positions 263 and 264. FMN-binding positions include proline 298 to threonine 300 and glutamine 352. Cysteine 383 (proton donor) is an active-site residue. A Glycyl lysine isopeptide (Lys-Gly) (interchain with G-Cter in SUMO2) cross-link involves residue lysine 403. Residues lysine 422, histidine 452, asparagine 484 to aspartate 486, and alanine 507 to arginine 508 contribute to the FMN site.

This sequence belongs to the Dus family. Dus3 subfamily. It depends on FMN as a cofactor.

The enzyme catalyses 5,6-dihydrouridine(47) in tRNA + NAD(+) = uridine(47) in tRNA + NADH + H(+). The catalysed reaction is 5,6-dihydrouridine(47) in tRNA + NADP(+) = uridine(47) in tRNA + NADPH + H(+). It carries out the reaction a 5,6-dihydrouridine in mRNA + NAD(+) = a uridine in mRNA + NADH + H(+). It catalyses the reaction a 5,6-dihydrouridine in mRNA + NADP(+) = a uridine in mRNA + NADPH + H(+). In terms of biological role, catalyzes the synthesis of dihydrouridine, a modified base, in various RNAs, such as tRNAs, mRNAs and some long non-coding RNAs (lncRNAs). Mainly modifies the uridine in position 47 (U47) in the D-loop of most cytoplasmic tRNAs. Also able to mediate the formation of dihydrouridine in some mRNAs, thereby regulating their translation. In Mus musculus (Mouse), this protein is tRNA-dihydrouridine(47) synthase [NAD(P)(+)]-like.